Reading from the N-terminus, the 292-residue chain is Elongation factor Ts (292 aa).

Residues 80–83 (TDFV) form an involved in Mg(2+) ion dislocation from EF-Tu region.

The protein belongs to the EF-Ts family.

The protein localises to the cytoplasm. In terms of biological role, associates with the EF-Tu.GDP complex and induces the exchange of GDP to GTP. It remains bound to the aminoacyl-tRNA.EF-Tu.GTP complex up to the GTP hydrolysis stage on the ribosome. This Limosilactobacillus fermentum (strain NBRC 3956 / LMG 18251) (Lactobacillus fermentum) protein is Elongation factor Ts.